The chain runs to 401 residues: Argininosuccinate synthase (401 aa).

Residue 9-17 coordinates ATP; sequence AYSGGLDTS. L-citrulline is bound at residue Y87. G117 provides a ligand contact to ATP. 3 residues coordinate L-aspartate: T119, N123, and D124. N123 lines the L-citrulline pocket. Residues R127, S176, S185, E261, and Y273 each contribute to the L-citrulline site.

Belongs to the argininosuccinate synthase family. Type 1 subfamily. Homotetramer.

The protein resides in the cytoplasm. It catalyses the reaction L-citrulline + L-aspartate + ATP = 2-(N(omega)-L-arginino)succinate + AMP + diphosphate + H(+). It participates in amino-acid biosynthesis; L-arginine biosynthesis; L-arginine from L-ornithine and carbamoyl phosphate: step 2/3. This chain is Argininosuccinate synthase, found in Prosthecochloris aestuarii (strain DSM 271 / SK 413).